Reading from the N-terminus, the 360-residue chain is Phospho-N-acetylmuramoyl-pentapeptide-transferase (360 aa).

10 helical membrane-spanning segments follow: residues arginine 25–isoleucine 45, threonine 73–leucine 93, tyrosine 97–tyrosine 117, phenylalanine 135–alanine 155, isoleucine 170–alanine 190, glycine 199–serine 219, alanine 236–phenylalanine 256, valine 263–isoleucine 283, isoleucine 288–valine 308, and valine 338–lysine 358.

It belongs to the glycosyltransferase 4 family. MraY subfamily. Mg(2+) is required as a cofactor.

Its subcellular location is the cell inner membrane. The catalysed reaction is UDP-N-acetyl-alpha-D-muramoyl-L-alanyl-gamma-D-glutamyl-meso-2,6-diaminopimeloyl-D-alanyl-D-alanine + di-trans,octa-cis-undecaprenyl phosphate = di-trans,octa-cis-undecaprenyl diphospho-N-acetyl-alpha-D-muramoyl-L-alanyl-D-glutamyl-meso-2,6-diaminopimeloyl-D-alanyl-D-alanine + UMP. It functions in the pathway cell wall biogenesis; peptidoglycan biosynthesis. In terms of biological role, catalyzes the initial step of the lipid cycle reactions in the biosynthesis of the cell wall peptidoglycan: transfers peptidoglycan precursor phospho-MurNAc-pentapeptide from UDP-MurNAc-pentapeptide onto the lipid carrier undecaprenyl phosphate, yielding undecaprenyl-pyrophosphoryl-MurNAc-pentapeptide, known as lipid I. This Pseudomonas savastanoi pv. phaseolicola (strain 1448A / Race 6) (Pseudomonas syringae pv. phaseolicola (strain 1448A / Race 6)) protein is Phospho-N-acetylmuramoyl-pentapeptide-transferase.